The sequence spans 1481 residues: Cystic fibrosis transmembrane conductance regulator (1481 aa).

Over 1–77 (MQRSPLEKAS…KLINALRRCF (77 aa)) the chain is Cytoplasmic. Residues 78 to 98 (FWRFMFYGILLYLGEVTKAVQ) form a helical membrane-spanning segment. The ABC transmembrane type-1 1 domain occupies 81–365 (FMFYGILLYL…WAVQTWYDSL (285 aa)). The Extracellular portion of the chain corresponds to 99–122 (PLLLGRIIASYDPDNKEERSIAIY). The helical transmembrane segment at 123–146 (LGIGLCLLFIVRTLLLHPAIFGLH) threads the bilayer. The Cytoplasmic portion of the chain corresponds to 147–195 (HIGMQMRIAMFSLIYKKTLKLSSRVLDKISIGQLVSLLSNNLNKFDEGL). The chain crosses the membrane as a helical span at residues 196–216 (ALAHFVWIVPLQVALLMGLIW). Residues 217 to 222 (ELLQAS) lie on the Extracellular side of the membrane. The chain crosses the membrane as a helical span at residues 223–243 (AFCGLGFLIVLALFQAGLGRM). The Cytoplasmic portion of the chain corresponds to 244–298 (MMKYRDQRAGKINERLVITSEMIENIQSVKAYCWEEAMEKMIENLRQTELKLTRK). Residues 299–319 (AAYVRYFNSSAFFFSGFFVVF) traverse the membrane as a helical segment. Residues 320–339 (LSVLPYALIKGIVLRKIFTT) lie on the Extracellular side of the membrane. A helical membrane pass occupies residues 340–358 (ISFCIVLRMAVTRQFPWAV). Residues 359–858 (QTWYDSLGAI…YLRYITVHKS (500 aa)) are Cytoplasmic-facing. Residues tryptophan 401, serine 434, 458–465 (GSTGAGKT), and glutamine 493 contribute to the ATP site. The ABC transporter 1 domain occupies 423-646 (NDDDSLFFSN…RPDFSSKLMG (224 aa)). A lipid anchor (S-palmitoyl cysteine) is attached at cysteine 524. 2 positions are modified to phosphoserine: serine 549 and serine 660. The disordered R region stretch occupies residues 654-831 (SAERRNSILT…EEINEEDLKE (178 aa)). Serine 670 is modified (phosphoserine; by PKA). Residue serine 686 is modified to Phosphoserine. Residue lysine 688 forms a Glycyl lysine isopeptide (Lys-Gly) (interchain with G-Cter in ubiquitin) linkage. A phosphoserine mark is found at serine 700 and serine 712. A Phosphothreonine modification is found at threonine 717. Residues serine 737, serine 753, serine 768, serine 790, serine 795, and serine 813 each carry the phosphoserine modification. The helical transmembrane segment at 859–879 (LIFVLIWCLVIFLAEVAASLV) threads the bilayer. An ABC transmembrane type-1 2 domain is found at 859-1155 (LIFVLIWCLV…AVNSSIDVDS (297 aa)). The Extracellular portion of the chain corresponds to 880-918 (VLWFLGNTPPQDKGNSTYSRNNSYAVIITRTSSYYVFYI). Residues asparagine 894 and asparagine 900 are each glycosylated (N-linked (GlcNAc...) asparagine). The chain crosses the membrane as a discontinuously helical span at residues 919–939 (YVGVADTLLAMGFFRGLPLVH). Over 940–990 (TLITVSKILHHKMLHSVLQAPMSTLNTLKAGGILNRFSKDIAILDDLLPLT) the chain is Cytoplasmic. The helical transmembrane segment at 991–1011 (IFDFIQLLLIVIGAIAVVAVL) threads the bilayer. Over 1012-1013 (QP) the chain is Extracellular. A helical transmembrane segment spans residues 1014-1034 (YIFVATVPVIVAFIMLRAYFL). Residues 1035-1095 (QTSQQLKQLE…TANWFLYLST (61 aa)) are Cytoplasmic-facing. Residues 1096 to 1116 (LRWFQMRIEMIFVIFFIAVTF) form a helical membrane-spanning segment. The Extracellular segment spans residues 1117 to 1130 (ISILTTGEGEGTVG). The helical transmembrane segment at 1131–1151 (IILTLAMNIMSTLQWAVNSSI) threads the bilayer. Topologically, residues 1152-1481 (DVDSLMRSVS…TEEEVQDTRL (330 aa)) are cytoplasmic. In terms of domain architecture, ABC transporter 2 spans 1211–1444 (MTVKDLTAKY…RSLFQQAISP (234 aa)). Residues tyrosine 1220 and 1245–1252 (GRTGSGKS) contribute to the ATP site. Positions 1387-1481 (RTLKQAFADC…TEEEVQDTRL (95 aa)) are interaction with GORASP2. Cysteine 1396 carries S-palmitoyl cysteine lipidation. A phosphoserine mark is found at serine 1445 and serine 1457. The PDZ-binding signature appears at 1479–1481 (TRL).

It belongs to the ABC transporter superfamily. ABCC family. CFTR transporter (TC 3.A.1.202) subfamily. As to quaternary structure, monomer; does not require oligomerization for channel activity. May form oligomers in the membrane. Interacts with SLC26A3, SLC26A6 and NHERF1. Interacts with SHANK2. Interacts with MYO6. Interacts (via C-terminus) with GOPC (via PDZ domain); this promotes CFTR internalization and thereby decreases channel activity. Interacts with SLC4A7 through NHERF1. Found in a complex with MYO5B and RAB11A. Interacts with ANO1. Interacts with SLC26A8. Interacts with AHCYL1; the interaction increases CFTR activity. Interacts with CSE1L. The core-glycosylated form interacts with GORASP2 (via PDZ GRASP-type 1 domain) in respone to ER stress. Interacts with MARCHF2; the interaction leads to CFTR ubiqtuitination and degradation. Interacts with ADGRG2. N-glycosylated. In terms of processing, phosphorylated; cAMP treatment promotes phosphorylation and activates the channel. Dephosphorylation decreases the ATPase activity (in vitro). Phosphorylation at PKA sites activates the channel. Phosphorylation at PKC sites enhances the response to phosphorylation by PKA. Phosphorylated by AMPK; this inhibits channel activity. Post-translationally, ubiquitinated, leading to its degradation in the lysosome. Deubiquitination by USP10 in early endosomes enhances its endocytic recycling to the cell membrane. Ubiquitinated by RNF185 during ER stress. Ubiquitinated by MARCHF2.

It localises to the apical cell membrane. Its subcellular location is the early endosome membrane. The protein localises to the cell membrane. The protein resides in the recycling endosome membrane. It is found in the endoplasmic reticulum membrane. It localises to the nucleus. It catalyses the reaction ATP + H2O + closed Cl(-) channel = ADP + phosphate + open Cl(-) channel.. It carries out the reaction chloride(in) = chloride(out). The catalysed reaction is hydrogencarbonate(in) = hydrogencarbonate(out). The enzyme catalyses ATP + H2O = ADP + phosphate + H(+). Its function is as follows. Epithelial ion channel that plays an important role in the regulation of epithelial ion and water transport and fluid homeostasis. Mediates the transport of chloride ions across the cell membrane. Possesses an intrinsic ATPase activity and utilizes ATP to gate its channel; the passive flow of anions through the channel is gated by cycles of ATP binding and hydrolysis by the ATP-binding domains. The ion channel is also permeable to HCO(3)(-); selectivity depends on the extracellular chloride concentration. Exerts its function also by modulating the activity of other ion channels and transporters. Contributes to the regulation of the pH and the ion content of the epithelial fluid layer. Modulates the activity of the epithelial sodium channel (ENaC) complex, in part by regulating the cell surface expression of the ENaC complex. May regulate bicarbonate secretion and salvage in epithelial cells by regulating the transporter SLC4A7. Can inhibit the chloride channel activity of ANO1. Plays a role in the chloride and bicarbonate homeostasis during sperm epididymal maturation and capacitation. The sequence is that of Cystic fibrosis transmembrane conductance regulator from Macaca nemestrina (Pig-tailed macaque).